Reading from the N-terminus, the 105-residue chain is Met repressor (105 aa).

Belongs to the MetJ family. As to quaternary structure, homodimer.

The protein localises to the cytoplasm. Functionally, this regulatory protein, when combined with SAM (S-adenosylmethionine) represses the expression of the methionine regulon and of enzymes involved in SAM synthesis. This chain is Met repressor, found in Citrobacter koseri (strain ATCC BAA-895 / CDC 4225-83 / SGSC4696).